Here is a 141-residue protein sequence, read N- to C-terminus: Endoribonuclease YbeY (141 aa).

Residues histidine 101, histidine 105, and histidine 111 each contribute to the Zn(2+) site.

The protein belongs to the endoribonuclease YbeY family. Zn(2+) is required as a cofactor.

Its subcellular location is the cytoplasm. Single strand-specific metallo-endoribonuclease involved in late-stage 70S ribosome quality control and in maturation of the 3' terminus of the 16S rRNA. This is Endoribonuclease YbeY from Nitrosomonas eutropha (strain DSM 101675 / C91 / Nm57).